The following is a 661-amino-acid chain: UvrABC system protein B (661 aa).

Positions 25–182 (AGLNSKKRSQ…NDLINLQYKR (158 aa)) constitute a Helicase ATP-binding domain. ATP is bound at residue 38-45 (GITGSGKT). Positions 91–114 (YYDYYQPEAYIARTDTFIEKDSSI) match the Beta-hairpin motif. Residues 430-592 (QVEDLISEIQ…IIPKTINRAI (163 aa)) form the Helicase C-terminal domain. One can recognise a UVR domain in the interval 621–656 (KANINKLNKEMLKAASNLEFEQAAKLRDQLKTLEAA).

Belongs to the UvrB family. Forms a heterotetramer with UvrA during the search for lesions. Interacts with UvrC in an incision complex.

The protein localises to the cytoplasm. Its function is as follows. The UvrABC repair system catalyzes the recognition and processing of DNA lesions. A damage recognition complex composed of 2 UvrA and 2 UvrB subunits scans DNA for abnormalities. Upon binding of the UvrA(2)B(2) complex to a putative damaged site, the DNA wraps around one UvrB monomer. DNA wrap is dependent on ATP binding by UvrB and probably causes local melting of the DNA helix, facilitating insertion of UvrB beta-hairpin between the DNA strands. Then UvrB probes one DNA strand for the presence of a lesion. If a lesion is found the UvrA subunits dissociate and the UvrB-DNA preincision complex is formed. This complex is subsequently bound by UvrC and the second UvrB is released. If no lesion is found, the DNA wraps around the other UvrB subunit that will check the other stand for damage. This Rickettsia akari (strain Hartford) protein is UvrABC system protein B.